We begin with the raw amino-acid sequence, 488 residues long: Zinc metalloproteinase-disintegrin agkistin (488 aa).

The first 20 residues, 1 to 20 (MIQVLLVTICLAVFPYQGSS), serve as a signal peptide directing secretion. Positions 21–195 (IILESGNVND…NFPPDGRIEF (175 aa)) are excised as a propeptide. The region spanning 198-394 (RYIELVIVAD…NPLASYCLYN (197 aa)) is the Peptidase M12B domain. E201 contacts Ca(2+). A glycan (N-linked (GlcNAc...) asparagine) is linked at N258. A Ca(2+)-binding site is contributed by D285. 3 disulfide bridges follow: C309–C391, C349–C373, and C351–C356. Zn(2+) is bound at residue H334. The active site involves E335. Residues H338 and H344 each coordinate Zn(2+). Positions 391, 394, 406, 409, 413, 416, and 419 each coordinate Ca(2+). The 85-residue stretch at 404-488 (PPVCGNYYLE…AGCPRNPSHA (85 aa)) folds into the Disintegrin domain. Disulfide bonds link C407–C426, C418–C436, C420–C431, C430–C453, C444–C450, C449–C474, and C462–C481. A Cell attachment site motif is present at residues 466–468 (RGD).

This sequence belongs to the venom metalloproteinase (M12B) family. P-II subfamily. P-IIb sub-subfamily. Monomer. It depends on Zn(2+) as a cofactor. Expressed by the venom gland.

Its subcellular location is the secreted. Functionally, inhibits ADP-induced human platelet aggregation, inhibits bovine aortic endothelial cells (BAEC) migration, has anti-angiogenic activity and induces BAEC and human micro-vascular endothelial cell (HMEC) apoptosis. The metalloproteinase domain may act in hemorrhage. This Gloydius halys (Chinese water mocassin) protein is Zinc metalloproteinase-disintegrin agkistin.